A 632-amino-acid chain; its full sequence is MSGGSRIQLLSPRLANQIAAGEVVERPASVAKELLENSLDSGARRIDVEVEQGGVKLLKVRDDGSGISADDLPLALARHATSKIRELEDLEGVMSLGFRGEALASISSVARLTMTSRTASASEAWQVETEGRDMTPRVQPAAHPVGTSVEVRDLFFNTPARRKFLKAEKTEFDHLQEVIRRLALARFDVGFHLRHNGKSILSLHEAHDETARARRVGAICGPGFMEQALPIDVERNGLRLWGWVGLPTFSRSQADLQYFFVNGRAVRDKLVAHAVRQAYRDVLFNGRHPTFVLFLELEPNGVDVNVHPTKHEVRFREGRSVHDFLYGTLHRALADVRPEDQLAAPAAVPELARPTGQQAGEFGPQGEMRLASPVLEQPRAPQQSFSNGGSGAGYQYQYTPRPSQPLPAAEAQAVYREFYKPLDNGAAAATALPESQGDIPPLGYALAQLKGIYILAENAVGLVLVDMHAAHERIMYERLKVAMASEGLSGQPLLVPETLALSQREADCAEEHAQWFQRLGFELQRLGPETLAVRQIPALLKQAEANRLVQDVLADLMEYGTSDRIQAHLNELLGTMACHGAVRANRRLAIPEMNALLRDMENTERSGQCNHGRPTWTQMGLDDLDKLFLRGR.

Belongs to the DNA mismatch repair MutL/HexB family.

Functionally, this protein is involved in the repair of mismatches in DNA. It is required for dam-dependent methyl-directed DNA mismatch repair. May act as a 'molecular matchmaker', a protein that promotes the formation of a stable complex between two or more DNA-binding proteins in an ATP-dependent manner without itself being part of a final effector complex. The sequence is that of DNA mismatch repair protein MutL from Pseudomonas putida (strain GB-1).